Here is a 363-residue protein sequence, read N- to C-terminus: Alanine racemase (363 aa).

The active-site Proton acceptor; specific for D-alanine is Lys-34. Position 34 is an N6-(pyridoxal phosphate)lysine (Lys-34). Substrate is bound at residue Arg-129. The active-site Proton acceptor; specific for L-alanine is the Tyr-256. Met-304 is a substrate binding site.

The protein belongs to the alanine racemase family. Pyridoxal 5'-phosphate is required as a cofactor.

It carries out the reaction L-alanine = D-alanine. Its pathway is amino-acid biosynthesis; D-alanine biosynthesis; D-alanine from L-alanine: step 1/1. Its function is as follows. Catalyzes the interconversion of L-alanine and D-alanine. May also act on other amino acids. The protein is Alanine racemase (alr) of Edwardsiella ictaluri (strain 93-146).